A 150-amino-acid chain; its full sequence is Transmembrane protein PMIS2 (150 aa).

Residues 1–12 (MALKPPSATQPA) show a composition bias toward low complexity. Residues 1–61 (MALKPPSATQ…EPQEPTQTPE (61 aa)) form a disordered region. Residues 13 to 22 (PNAPATPDAP) show a composition bias toward pro residues. A compositionally biased stretch (low complexity) spans 23-61 (PTTGDPGASAAPGSPTTTGGPGAPAEVPQEPQEPTQTPE). The next 2 membrane-spanning stretches (helical) occupy residues 71–91 (LCLT…ALYF) and 130–150 (GWFG…LVLY).

The protein belongs to the CD225/Dispanin family.

The protein resides in the membrane. Its function is as follows. May play a role in spermatozoa mobility. This is Transmembrane protein PMIS2 from Homo sapiens (Human).